The chain runs to 79 residues: uncharacterized protein (79 aa).

The first 33 residues, 1 to 33 (MRLIIRAIVLLALVWIGLLMSGYGILVGSKVNA), serve as a signal peptide directing secretion.

This is an uncharacterized protein from Salmonella typhi.